A 228-amino-acid chain; its full sequence is Eukaryotic translation initiation factor 4E-1 (228 aa).

A compositionally biased stretch (basic and acidic residues) spans 1-19; it reads MATAEMEKTTTFDEAEKVK. The disordered stretch occupies residues 1-33; it reads MATAEMEKTTTFDEAEKVKLNANEADDEVEEGE. Acidic residues predominate over residues 24 to 33; sequence EADDEVEEGE. EIF4G-binding regions lie at residues 53–56 and 63–99; these read HPLE and FDNP…NNIH. Residues 71–76, K103, and 121–122 each bind mRNA; these read KQAAWG and WE. A disulfide bridge links C126 with C164. Positions 147-156 are EIF4G-binding; sequence YTLLAMIGHQ. Residues 171-176 and 216-220 contribute to the mRNA site; these read RGKGEK and KRLDR.

It belongs to the eukaryotic initiation factor 4E family. In terms of assembly, EIF4F is a multi-subunit complex, the composition of which varies with external and internal environmental conditions. It is composed of at least EIF4A, EIF4E and EIF4G. EIF4E is also known to interact with other partners. In higher plants two isoforms of EIF4F have been identified, named isoform EIF4F and isoform EIF(iso)4F. Isoform EIF4F has subunits p220 and p26, whereas isoform EIF(iso)4F has subunits p82 and p28. As to quaternary structure, (Microbial infection) Interacts with potyvirus viral genome-linked protein (VPg); this interaction is possible in susceptible hosts but is impaired in resistant plants. Thus the VPg of tobacco etch virus (TEV) strain HAT interacts with susceptible alleles pvr2(+), pvr2(3) and pvr2(9) but not with the resistant allele pvr2(2), the VPg of TEV strain CAA10 interacts with susceptible alleles pvr2(+), pvr2(2), pvr2(3) and pvr2(9), the VPg of potato virus Y (PVY) strain LYE84 interacts with tomato eIF4E1 and eIF4E2 as well as with the Capsicum annuum eIF4E1 susceptible allele pvr2(+) but not with resistant alleles pvr2(1), pvr2(2), pvr2(3), pvr2(4), pvr2(5), pvr2(6), pvr2(7), pvr2(8) and pvr2(9) and the VPg of PVY strain SON41 interacts with C.annuum eIF4E1 susceptible alleles pvr2(+), pvr2(1), pvr2(2), pvr2(3) and pvr2(4) but not with resistant alleles pvr2(5), pvr2(6), pvr2(7), pvr2(8) and pvr2(9). In addition, the susceptible allele pvr1(+) interacts strongly with TEV strains HAT and NW VPg while resistance alleles (pvr1, pvr1(1), and pvr1(2)) fail to bind TEV VPg. According to the redox status, the Cys-126-Cys-164 disulfide bridge may have a role in regulating protein function by affecting its ability to bind capped mRNA.

The protein resides in the nucleus. Its subcellular location is the cytoplasm. Component of the protein complex eIF4F, which is involved in the recognition of the mRNA cap, ATP-dependent unwinding of 5'-terminal secondary structure and recruitment of mRNA to the ribosome. Recognizes and binds the 7-methylguanosine-containing mRNA cap during an early step in the initiation of protein synthesis and facilitates ribosome binding by inducing the unwinding of the mRNAs secondary structures. Key component of recessive resistance to potyviruses. Functionally, (Microbial infection) Susceptibility host factor required for viral infection (e.g. potato virus Y (PVY) and tobacco etch virus (TEV)) by recruiting viral RNAs to the host ribosomal complex via an interaction with viral genome-linked protein (VPg). The protein is Eukaryotic translation initiation factor 4E-1 of Capsicum annuum (Capsicum pepper).